A 601-amino-acid chain; its full sequence is Elongation factor 4 (601 aa).

Residues 7 to 189 (RNIRNFSIIA…AIVHRIPPPA (183 aa)) enclose the tr-type G domain. GTP is bound by residues 19–24 (DHGKST) and 136–139 (NKID).

The protein belongs to the TRAFAC class translation factor GTPase superfamily. Classic translation factor GTPase family. LepA subfamily.

It localises to the cell inner membrane. It catalyses the reaction GTP + H2O = GDP + phosphate + H(+). Required for accurate and efficient protein synthesis under certain stress conditions. May act as a fidelity factor of the translation reaction, by catalyzing a one-codon backward translocation of tRNAs on improperly translocated ribosomes. Back-translocation proceeds from a post-translocation (POST) complex to a pre-translocation (PRE) complex, thus giving elongation factor G a second chance to translocate the tRNAs correctly. Binds to ribosomes in a GTP-dependent manner. In Xanthomonas oryzae pv. oryzae (strain MAFF 311018), this protein is Elongation factor 4.